The chain runs to 362 residues: Putative F-box/kelch-repeat protein At3g20710 (362 aa).

Residues 1–50 (MMMSNLPKDLVEEILSRVPFKYLRAIRSTCKNWYDLSKNRSFANKNIDKA) form the F-box domain. Kelch repeat units lie at residues 150–201 (YDKS…VSLN) and 293–341 (IYCR…YFKS).

The protein is Putative F-box/kelch-repeat protein At3g20710 of Arabidopsis thaliana (Mouse-ear cress).